Here is a 298-residue protein sequence, read N- to C-terminus: ATP phosphoribosyltransferase (298 aa).

It belongs to the ATP phosphoribosyltransferase family. Long subfamily. Mg(2+) serves as cofactor.

It localises to the cytoplasm. The catalysed reaction is 1-(5-phospho-beta-D-ribosyl)-ATP + diphosphate = 5-phospho-alpha-D-ribose 1-diphosphate + ATP. It participates in amino-acid biosynthesis; L-histidine biosynthesis; L-histidine from 5-phospho-alpha-D-ribose 1-diphosphate: step 1/9. Its activity is regulated as follows. Feedback inhibited by histidine. Catalyzes the condensation of ATP and 5-phosphoribose 1-diphosphate to form N'-(5'-phosphoribosyl)-ATP (PR-ATP). Has a crucial role in the pathway because the rate of histidine biosynthesis seems to be controlled primarily by regulation of HisG enzymatic activity. This is ATP phosphoribosyltransferase from Psychromonas ingrahamii (strain DSM 17664 / CCUG 51855 / 37).